We begin with the raw amino-acid sequence, 1069 residues long: ISWI chromatin-remodeling complex ATPase CHR17 (1069 aa).

Positions 1 to 10 (MARASKREVS) are enriched in basic and acidic residues. 2 disordered regions span residues 1 to 93 (MARA…KEMQ) and 136 to 168 (FAKS…EECL). 2 stretches are compositionally biased toward acidic residues: residues 15 to 37 (YSSE…DELE) and 45 to 78 (SDEE…DEEK). Residues 79 to 93 (AEISKREKARLKEMQ) show a composition bias toward basic and acidic residues. Basic residues predominate over residues 146–156 (KKGKGRGRHSS). In terms of domain architecture, Helicase ATP-binding spans 206–371 (IRLYENGING…WALLNFLLPE (166 aa)). Position 219 to 226 (219 to 226 (DEMGLGKT)) interacts with ATP. Residues 322–325 (DEAH) carry the DEAH box motif. The Helicase C-terminal domain occupies 499 to 650 (LLDKLLPKLK…ALVIQQGRLA (152 aa)). SANT domains follow at residues 845 to 897 (EGFS…VRYK) and 946 to 1007 (QNKG…DTLI). The tract at residues 1016-1069 (EFDERERQARKEKKLSKSATPSKRPSGRQANESPSSLLKKRKQLSMDDYGKRRK) is disordered. Positions 1032-1051 (KSATPSKRPSGRQANESPSS) are enriched in polar residues. Positions 1059 to 1069 (LSMDDYGKRRK) are enriched in basic and acidic residues.

It belongs to the SNF2/RAD54 helicase family. ISWI subfamily. In terms of assembly, interacts with RLT1. Binds to FGT1. In terms of tissue distribution, highly expressed in growing tissues such as inflorescence and flower meristems, young leaves and floral organs. Expressed in roots, rosette and cauline leaves, stems, flowers, inflorescences and siliques.

Its subcellular location is the nucleus. Its function is as follows. Possesses intrinsic ATP-dependent nucleosome-remodeling activity. Constitutes the catalytic subunit of several complexes capable of forming ordered nucleosome arrays on chromatin. Involved in the formation of nucleosome distribution patterns. Required for the maintenance of the plant vegetative phase. In association with RLT1 or RLT2 may prevent the early activation of the vegetative-to-reproductive transition by regulating key genes that contribute to flower timing, such as FT, SEP1, SEP3, AGL8/FUL, SOC1 and FLC. Necessary to acquire heat stress (HS) memory. The protein is ISWI chromatin-remodeling complex ATPase CHR17 of Arabidopsis thaliana (Mouse-ear cress).